The following is a 60-amino-acid chain: Large ribosomal subunit protein uL30 (60 aa).

This sequence belongs to the universal ribosomal protein uL30 family. Part of the 50S ribosomal subunit.

The polypeptide is Large ribosomal subunit protein uL30 (Xanthobacter autotrophicus (strain ATCC BAA-1158 / Py2)).